The chain runs to 252 residues: MCHNKSSAPPTPAHISIQQNRTPGTDPVPYLHASSDTGSGDTIVLLTDIFGVTPFYRHLAAMLAEKGHDVVIPDVFHRVGHATDPGRDAALARRRQLDDRLAIEDIERTVAHTVDDQQTFGVLGFCLGGSFALLTAAAHPNQVTATYYAFPKGAPGAKVPVKPPLEAADAIDGPVLCHWGRDDYIDHEEIDQLEQILASAPGPSEIRWYDNAGHSFLAGLTEPNHPSTAAAHDSWQRTVEFFERYLTVGSAN.

The segment at 1–28 is disordered; it reads MCHNKSSAPPTPAHISIQQNRTPGTDPV. Residues Cys-126, Asp-183, and His-214 contribute to the active site.

This sequence belongs to the dienelactone hydrolase family.

The enzyme catalyses 2-(5-oxo-2,5-dihydrofuran-2-ylidene)acetate + H2O = 4-oxohex-2-enedioate + H(+). Its pathway is aromatic compound metabolism; 3-chlorocatechol degradation. In terms of biological role, ring cleavage of cyclic ester dienelactone to produce maleylacetate. The chain is Carboxymethylenebutenolidase (clcD) from Rhodococcus opacus (Nocardia opaca).